The chain runs to 516 residues: Circadian clock oscillator protein KaiC (516 aa).

KaiC domains lie at 1–244 (MNQP…INIF) and 258–516 (ARIS…TLPE). Residues Gly-46, Thr-47, Gly-48, Lys-49, Thr-50, Leu-51, Ser-86, Lys-221, Leu-222, Arg-223, Thr-225, His-227, Thr-237, Thr-287, Gly-288, Thr-289, Gly-290, Lys-291, Thr-292, and Leu-293 each contribute to the ATP site. Thr-50 serves as a coordination point for Mg(2+). Residue Thr-292 participates in Mg(2+) binding. A Mg(2+)-binding site is contributed by Glu-315. ATP is bound at residue Trp-328. Ser-428 bears the Phosphoserine; by autocatalysis mark. Residue Thr-429 is modified to Phosphothreonine; by autocatalysis. ATP contacts are provided by Arg-448, Lys-454, Met-455, Arg-456, Ser-458, His-460, and Lys-462.

Belongs to the KaiC family. Homohexamer; hexamerization is dependent on ATP-binding. The KaiABC complex composition changes during the circadian cycle to control KaiC phosphorylation. Complexes KaiC(6), KaiA(2-4):KaiC(6), KaiB(6):KaiC(6) and KaiC(6):KaiB(6):KaiA(12) are among the most important forms, many form cooperatively. KaiC interacts with SasA, activating its autokinase function and leading to RpaA activation. Mg(2+) serves as cofactor. Phosphorylated on serine and threonine residues by autocatalysis. Has a 4 step phosphorylation cycle; the autokinase acts first on Thr-429, then Ser-428. When Ser-428 is modified KaiC switches to an autophosphatase mode, acting first on phospho-Thr-429 then phospho-Ser-428.

It catalyses the reaction L-seryl-[protein] + ATP = O-phospho-L-seryl-[protein] + ADP + H(+). It carries out the reaction L-threonyl-[protein] + ATP = O-phospho-L-threonyl-[protein] + ADP + H(+). The enzyme catalyses ATP + H2O = ADP + phosphate + H(+). Its activity is regulated as follows. The interaction with KaiA enhances its phosphorylation status, while the interaction with KaiB decreases it. In terms of biological role, central component of the KaiABC oscillator complex, which constitutes the main circadian regulator in cyanobacteria. Complex composition changes during the circadian cycle to control KaiC phosphorylation. KaiA stimulates KaiC autophosphorylation, while KaiB sequesters KaiA, leading to KaiC autodephosphorylation. Clock output pathways impact the RpaA transcriptional regulator. KaiC enhances the autophosphorylation activity of SasA, which then transfers its phosphate group to RpaA to activate it. KaiB and KaiC together enhance the phospho-RpaA dephosphatase activity of CikA. Has a weak, temperature-independent ATPase activity; ATPase activity defines the circadian period. The phosphorylation state of KaiC modulates its ATPase activity and effects KaiB binding. The protein is Circadian clock oscillator protein KaiC of Picosynechococcus sp. (strain ATCC 27264 / PCC 7002 / PR-6) (Agmenellum quadruplicatum).